A 68-amino-acid polypeptide reads, in one-letter code: Large ribosomal subunit protein bL31 (68 aa).

The Zn(2+) site is built by Cys-16, Cys-18, Cys-36, and Cys-39.

The protein belongs to the bacterial ribosomal protein bL31 family. Type A subfamily. Part of the 50S ribosomal subunit. Zn(2+) serves as cofactor.

Functionally, binds the 23S rRNA. This is Large ribosomal subunit protein bL31 from Sorangium cellulosum (strain So ce56) (Polyangium cellulosum (strain So ce56)).